The following is a 170-amino-acid chain: Transmembrane protein 217B (170 aa).

Positions 1 to 21 (MNVRMFSLMVGIFSVLNTTQF) are cleaved as a signal peptide. The Lumenal segment spans residues 22 to 58 (FIFDLNQKTHICYEAKFSIYVDSKSELVTWTLFHRAN). Residues 59–79 (ISTGLSLTTIIIGCFLFYCIH) form a helical membrane-spanning segment. Over 80–85 (KNIYMG) the chain is Cytoplasmic. Residues 86–106 (LLIYAMWIITYELINFSIVLL) form a helical membrane-spanning segment. At 107–120 (LNGIIKDHFKTLSY) the chain is on the lumenal side. Residues 121-141 (LHWIFQISHMLLHFFCLPFIV) form a helical membrane-spanning segment. Topologically, residues 142–170 (KHAYNLYKESQTVGRKRRHRLCSTIAVNS) are cytoplasmic.

The protein resides in the membrane. In Homo sapiens (Human), this protein is Transmembrane protein 217B.